The primary structure comprises 230 residues: Ribonuclease 3 (230 aa).

The 130-residue stretch at 5 to 134 (EALLENSFNI…FLGALLLDKG (130 aa)) folds into the RNase III domain. E47 contributes to the Mg(2+) binding site. D51 is a catalytic residue. D120 and E123 together coordinate Mg(2+). The active site involves E123. In terms of domain architecture, DRBM spans 160–229 (DYKTCLQELL…AKNALAQLSE (70 aa)).

The protein belongs to the ribonuclease III family. In terms of assembly, homodimer. The cofactor is Mg(2+).

It is found in the cytoplasm. The enzyme catalyses Endonucleolytic cleavage to 5'-phosphomonoester.. In terms of biological role, digests double-stranded RNA. Involved in the processing of primary rRNA transcript to yield the immediate precursors to the large and small rRNAs (23S and 16S). Processes some mRNAs, and tRNAs when they are encoded in the rRNA operon. Processes pre-crRNA and tracrRNA of type II CRISPR loci if present in the organism. The polypeptide is Ribonuclease 3 (Streptococcus equi subsp. zooepidemicus (strain H70)).